The sequence spans 385 residues: Putative 8-amino-7-oxononanoate synthase (385 aa).

Arg-21 contributes to the substrate binding site. Residue 108-109 coordinates pyridoxal 5'-phosphate; it reads GY. His-133 provides a ligand contact to substrate. Residues Ser-182, 207–210, and 234–237 contribute to the pyridoxal 5'-phosphate site; these read DEAH and TFGK. At Lys-237 the chain carries N6-(pyridoxal phosphate)lysine. Residue Ser-351 participates in substrate binding.

It belongs to the class-II pyridoxal-phosphate-dependent aminotransferase family. BioF subfamily. Homodimer. Requires pyridoxal 5'-phosphate as cofactor.

The catalysed reaction is 6-carboxyhexanoyl-[ACP] + L-alanine + H(+) = (8S)-8-amino-7-oxononanoate + holo-[ACP] + CO2. The protein operates within cofactor biosynthesis; biotin biosynthesis. In terms of biological role, catalyzes the decarboxylative condensation of pimeloyl-[acyl-carrier protein] and L-alanine to produce 8-amino-7-oxononanoate (AON), [acyl-carrier protein], and carbon dioxide. In Desulfosudis oleivorans (strain DSM 6200 / JCM 39069 / Hxd3) (Desulfococcus oleovorans), this protein is Putative 8-amino-7-oxononanoate synthase (bioF).